Reading from the N-terminus, the 192-residue chain is uncharacterized protein (192 aa).

A Nudix hydrolase domain is found at 29-160; the sequence is RRQAAVLIPV…PLDIYRRGDS (132 aa). The Nudix box motif lies at 67–89; it reads GAVDSSDASLIAAALREAQEEVA. 2 residues coordinate Mg(2+): Glu-83 and Glu-87.

The protein belongs to the Nudix hydrolase family. PCD1 subfamily. The cofactor is Mn(2+). Mg(2+) is required as a cofactor.

Probably mediates the hydrolysis of some nucleoside diphosphate derivatives. This is an uncharacterized protein from Citrobacter koseri (strain ATCC BAA-895 / CDC 4225-83 / SGSC4696).